A 122-amino-acid chain; its full sequence is Fluoride-specific ion channel FluC 2 (122 aa).

The next 4 helical transmembrane spans lie at 3-23 (ITAISLVLFGSTFGLIFRMFI), 38-58 (TSIVNFIASFFLGILLALNLT), 62-82 (LLLLFYIGFLGCFSTFSSFIY), and 93-113 (FMHLFFHYFEVIIISFICFYL). Na(+)-binding residues include Gly-72 and Ser-75.

This sequence belongs to the fluoride channel Fluc/FEX (TC 1.A.43) family.

It localises to the cell inner membrane. It carries out the reaction fluoride(in) = fluoride(out). Its activity is regulated as follows. Na(+) is not transported, but it plays an essential structural role and its presence is essential for fluoride channel function. Functionally, fluoride-specific ion channel. Important for reducing fluoride concentration in the cell, thus reducing its toxicity. This chain is Fluoride-specific ion channel FluC 2, found in Prochlorococcus marinus (strain MIT 9312).